Reading from the N-terminus, the 380-residue chain is Gap junction gamma-1 protein (380 aa).

The Cytoplasmic segment spans residues 1–22 (MSWSFLTRLLDEISNHSTFVGK). The chain crosses the membrane as a helical span at residues 23–45 (IWLTLFIIFRIVLTVVGGESIYY). Topologically, residues 46–75 (DEQSKFVCNTQQPGCENVCYDAFAPLSHVR) are extracellular. The chain crosses the membrane as a helical span at residues 76–95 (FWVFQIILITTPTIMYLGFA). At 96–171 (MHKIARSNDV…RRIKRDGLMK (76 aa)) the chain is on the cytoplasmic side. The helical transmembrane segment at 172–194 (VYILQLLSRIIFEVGFLFGQYIL) threads the bilayer. Topologically, residues 195-228 (YGFEVAPSYVCTRSPCPHTVDCFVSRPTEKTIFL) are extracellular. The helical transmembrane segment at 229–251 (LIMYAVSCLCLSLTVLEILHLGL) threads the bilayer. Topologically, residues 252-380 (SGIRDAFRRR…GSKCEKGIHA (129 aa)) are cytoplasmic. The interval 337–380 (AYQNGESSPSRSSSPESNGTAVEQNRLNFAQEKQGSKCEKGIHA) is disordered. Low complexity predominate over residues 342–353 (ESSPSRSSSPES). Over residues 354–369 (NGTAVEQNRLNFAQEK) the composition is skewed to polar residues. A compositionally biased stretch (basic and acidic residues) spans 370-380 (QGSKCEKGIHA).

It belongs to the connexin family. Gamma-type subfamily. A connexon is composed of a hexamer of connexins.

The protein resides in the cell membrane. The protein localises to the cell junction. It is found in the gap junction. In terms of biological role, one gap junction consists of a cluster of closely packed pairs of transmembrane channels, the connexons, through which materials of low MW diffuse from one cell to a neighboring cell. Participates in a developmental pathway for formation of the notochord and tail. The polypeptide is Gap junction gamma-1 protein (gjc1) (Danio rerio (Zebrafish)).